Reading from the N-terminus, the 250-residue chain is tRNA (guanine-N(1)-)-methyltransferase (250 aa).

S-adenosyl-L-methionine is bound by residues G116 and 136-141 (IGDYVL).

The protein belongs to the RNA methyltransferase TrmD family. Homodimer.

The protein localises to the cytoplasm. It carries out the reaction guanosine(37) in tRNA + S-adenosyl-L-methionine = N(1)-methylguanosine(37) in tRNA + S-adenosyl-L-homocysteine + H(+). Specifically methylates guanosine-37 in various tRNAs. The chain is tRNA (guanine-N(1)-)-methyltransferase from Pseudomonas fluorescens (strain ATCC BAA-477 / NRRL B-23932 / Pf-5).